The primary structure comprises 127 residues: Small ribosomal subunit protein uS13 (127 aa).

Residues 93–127 (RRGMPVRGQRTRTNARTRRGRRGQAIGIKKKATKK) are disordered.

The protein belongs to the universal ribosomal protein uS13 family. In terms of assembly, part of the 30S ribosomal subunit. Forms a loose heterodimer with protein S19. Forms two bridges to the 50S subunit in the 70S ribosome.

In terms of biological role, located at the top of the head of the 30S subunit, it contacts several helices of the 16S rRNA. In the 70S ribosome it contacts the 23S rRNA (bridge B1a) and protein L5 of the 50S subunit (bridge B1b), connecting the 2 subunits; these bridges are implicated in subunit movement. Contacts the tRNAs in the A and P-sites. The protein is Small ribosomal subunit protein uS13 of Chloroflexus aurantiacus (strain ATCC 29366 / DSM 635 / J-10-fl).